The sequence spans 384 residues: MSSVPAPREYFLDSIRAWLMLLGIPFHISLIYSTHSWHVNSATPSWWLTLFNDFIHAFRMQVFFVISGYFSYMLFLRYPLKRWWKVRVERVGIPMLTAIPLLTLPQFILLQYVKEKTENWPTLSAYEKYNTLAWELISHLWFLLVLVILTTVSIGIFTWFQKRQETSKPRPAAISLARLSLIFFLLGMAYAAIRRIIFIVYPAILSDGMFNFIVMQTLFYVPFFILGALAFIHPDLKARFTTPSRGCTLGAAVAFIAYLLNQRYGSGDAWMYETESVITMVMGLWMVNVVFSLGHRLLNFQSARVTYFVNASLFIYLVHHPLTLFFGAYITPHISSNLIGFLCGLIFVMGIALILYEIHLRIPLLKFLFSGKPPVKQESRAAIG.

The next 10 membrane-spanning stretches (helical) occupy residues 17–37 (AWLM…THSW), 54–74 (FIHA…SYML), 91–111 (VGIP…ILLQ), 140–160 (LWFL…FTWF), 173–193 (AISL…YAAI), 212–232 (FIVM…LAFI), 240–260 (FTTP…AYLL), 274–294 (TESV…FSLG), 311–331 (ASLF…AYIT), and 338–358 (LIGF…LYEI).

The protein belongs to the acyltransferase 3 family. OpgC subfamily.

The protein localises to the cell membrane. It participates in glycan metabolism; osmoregulated periplasmic glucan (OPG) biosynthesis. Functionally, necessary for the succinyl substitution of periplasmic glucans. Could catalyze the transfer of succinyl residues from the cytoplasmic side of the membrane to the nascent glucan backbones on the periplasmic side of the membrane. This Salmonella agona (strain SL483) protein is Glucans biosynthesis protein C.